We begin with the raw amino-acid sequence, 689 residues long: Protein asunder (689 aa).

Residues 521–550 adopt a coiled-coil conformation; sequence NGARLKLSKAKDQYRLLYRELEQLIQLNAT. Disordered regions lie at residues 578 to 619 and 662 to 689; these read GASL…SKRR and PDFG…SVRS. A compositionally biased stretch (low complexity) spans 599–614; that stretch reads SSGSASGSSNSNSLLK. A Nuclear localization signal (NLS) motif is present at residues 613-619; the sequence is LKASKRR.

Belongs to the Integrator subunit 13 family. Belongs to the multiprotein complex Integrator, at least composed of IntS1, IntS2, IntS3, IntS4, omd/IntS5, IntS6, defl/IntS7, IntS8, IntS9, IntS10, IntS11, IntS12, asun/IntS13, IntS14 and IntS15. The core complex associates with protein phosphatase 2A subunits mts/PP2A and Pp2A-29B, to form the Integrator-PP2A (INTAC) complex. Post-translationally, phosphorylated.

The protein localises to the nucleus. It localises to the cytoplasm. Its subcellular location is the perinuclear region. In terms of biological role, component of the integrator complex, a multiprotein complex that terminates RNA polymerase II (Pol II) transcription in the promoter-proximal region of genes. The integrator complex provides a quality checkpoint during transcription elongation by driving premature transcription termination of transcripts that are unfavorably configured for transcriptional elongation: the complex terminates transcription by (1) catalyzing dephosphorylation of the C-terminal domain (CTD) of Pol II subunit Polr2A/Rbp1 and Spt5, and (2) degrading the exiting nascent RNA transcript via endonuclease activity. The integrator complex is also involved in the 3'-end processing of the U7 snRNA, and also the spliceosomal snRNAs U1, U2, U4 and U5. The sequence is that of Protein asunder (asun) from Drosophila yakuba (Fruit fly).